Here is a 468-residue protein sequence, read N- to C-terminus: Immunoglobulin superfamily member 21 (468 aa).

The signal sequence occupies residues 1 to 24; it reads MQAAPSLRRASCLLLAAILDLARG. The 108-residue stretch at 25 to 132 folds into the Ig-like 1 domain; sequence YLTVNIEPLP…RATREKVVLA (108 aa). Cys46 and Cys116 are oxidised to a cystine. 3 N-linked (GlcNAc...) asparagine glycosylation sites follow: Asn82, Asn165, and Asn407. Residues 344–429 form the Ig-like 2 domain; sequence PKIMMTPSRA…GSTDTHTRLI (86 aa).

In terms of assembly, interacts (Ig-like 1 domain) with NRXN2 (via Laminin G-like 1 domain) in a trans-interaction manner. Expressed in brain (at protein levels). Highly expressed in the pyramidal cell layer of the dorsal and ventral hippocampal CA1 and CA3 regions, layers 5 and 6 of the cortex, the thalamus and the pons and weakly expressed in the cerebellum. Expressed in neurons but not in glia.

It is found in the postsynaptic cell membrane. Functionally, involved in synaptic inhibition in the brain. Selectively regulates inhibitory presynaptic differentiation through interacting with presynaptic NRXN2. This Mus musculus (Mouse) protein is Immunoglobulin superfamily member 21 (Igsf21).